The following is a 724-amino-acid chain: Actin-related protein 5 (724 aa).

Disordered stretches follow at residues 358 to 391 (QSLR…LMNV), 412 to 450 (TTAE…ESYL), and 467 to 488 (KKRL…IGRG). Residues 414-446 (AEGRLRARQKRNEEELEKEKRNQLEEERRRENP) are compositionally biased toward basic and acidic residues. Ser-542 bears the Phosphoserine mark.

Belongs to the actin family. ARP5 subfamily. As to quaternary structure, component of the INO80 chromatin-remodeling complex. Interacts with EEN. Expressed ubiquitously in seedlings, roots, leaves, buds, flowers and siliques.

Its subcellular location is the nucleus. It localises to the nucleoplasm. The protein resides in the cytoplasm. Functionally, probable subunit of a chromatin-remodeling complex. Involved in DNA repair. Required for multicellular development of all organs. The chain is Actin-related protein 5 from Arabidopsis thaliana (Mouse-ear cress).